A 137-amino-acid polypeptide reads, in one-letter code: Large ribosomal subunit protein uL16 (137 aa).

This sequence belongs to the universal ribosomal protein uL16 family. As to quaternary structure, part of the 50S ribosomal subunit.

Its function is as follows. Binds 23S rRNA and is also seen to make contacts with the A and possibly P site tRNAs. This chain is Large ribosomal subunit protein uL16, found in Allorhizobium ampelinum (strain ATCC BAA-846 / DSM 112012 / S4) (Agrobacterium vitis (strain S4)).